The primary structure comprises 25 residues: Bioremediase (25 aa).

An Alpha-carbonic anhydrase domain is found at 1–25 (DFPIANGERQSPVDIDTKAVVQDPA). The segment at 1-25 (DFPIANGERQSPVDIDTKAVVQDPA) is disordered.

It belongs to the alpha-carbonic anhydrase family. Requires Zn(2+) as cofactor.

Its function is as follows. Releases silica from silica-rich substances. This is Bioremediase from Thermoanaerobacter sp.